Consider the following 178-residue polypeptide: NADH-quinone oxidoreductase subunit I (178 aa).

4Fe-4S ferredoxin-type domains lie at 45–74 (RHPDTGLEKCIGCSLCAAACPAYAIYVEAA) and 90–119 (KVYEINMLRCIFCGLCEEACPTGAVVLGNE). Residues Cys-54, Cys-57, Cys-60, Cys-64, Cys-99, Cys-102, Cys-105, and Cys-109 each coordinate [4Fe-4S] cluster.

This sequence belongs to the complex I 23 kDa subunit family. In terms of assembly, NDH-1 is composed of 15 different subunits. Subunits NuoA, H, J, K, L, M, N constitute the membrane sector of the complex. [4Fe-4S] cluster serves as cofactor.

It is found in the cell membrane. The catalysed reaction is a quinone + NADH + 5 H(+)(in) = a quinol + NAD(+) + 4 H(+)(out). In terms of biological role, NDH-1 shuttles electrons from NADH, via FMN and iron-sulfur (Fe-S) centers, to quinones in the respiratory chain. The immediate electron acceptor for the enzyme in this species is believed to be ubiquinone. Couples the redox reaction to proton translocation (for every two electrons transferred, four hydrogen ions are translocated across the cytoplasmic membrane), and thus conserves the redox energy in a proton gradient. In Deinococcus radiodurans (strain ATCC 13939 / DSM 20539 / JCM 16871 / CCUG 27074 / LMG 4051 / NBRC 15346 / NCIMB 9279 / VKM B-1422 / R1), this protein is NADH-quinone oxidoreductase subunit I.